A 1055-amino-acid polypeptide reads, in one-letter code: TNF receptor-associated factor homolog 1a (1055 aa).

Residues Met-1–Asp-56 are disordered. Residues Ser-37–Ser-46 are compositionally biased toward polar residues. The MATH domain maps to Phe-68–Val-191. 4 disordered regions span residues Pro-352–Asp-380, Ala-431–Tyr-590, Phe-603–Ile-772, and Val-820–Ser-845. Over residues Ser-433–Lys-446 the composition is skewed to basic and acidic residues. A coiled-coil region spans residues Ala-441–Lys-496. Over residues Lys-447–Asn-460 the composition is skewed to basic residues. The span at Lys-461–Val-486 shows a compositional bias: basic and acidic residues. The span at Asp-502 to Ser-513 shows a compositional bias: low complexity. Residues Arg-524 to Glu-537 are compositionally biased toward basic and acidic residues. Residues Met-569–Ala-586 show a composition bias toward polar residues. Basic and acidic residues predominate over residues Gln-657–Val-668. 2 stretches are compositionally biased toward polar residues: residues Lys-723–Thr-740 and Ser-823–Ser-845.

As to quaternary structure, interacts with AHK3. Interacts with ATG6, SINAT1, SINAT2, SINAT5 and SINAT6.

It is found in the cytoplasm. Functionally, functions redundantly with TRAF1B in the regulation of plant immune response. Contributes to the turnover of the nucleotide-binding domain and leucine-rich repeat-containing (NB-LRR) immune receptors SNC1 and RPS2. May associate with an E3 ubiquitin-protein ligase complex, which modulates ubiquitination and subsequent degradation of NB-LRR immune sensors to maintain their homeostasis. Functions redundantly with TRAF1B in the regulation of autophagosome formation. Required for SINAT1- and SINAT2-mediated ubiquitination and destabilization of ATG6. Functions as a molecular adapter that helps to regulate autophagy by modulating ATG6 stability. The polypeptide is TNF receptor-associated factor homolog 1a (Arabidopsis thaliana (Mouse-ear cress)).